Here is a 481-residue protein sequence, read N- to C-terminus: Aspartyl/glutamyl-tRNA(Asn/Gln) amidotransferase subunit B (481 aa).

This sequence belongs to the GatB/GatE family. GatB subfamily. Heterotrimer of A, B and C subunits.

It carries out the reaction L-glutamyl-tRNA(Gln) + L-glutamine + ATP + H2O = L-glutaminyl-tRNA(Gln) + L-glutamate + ADP + phosphate + H(+). It catalyses the reaction L-aspartyl-tRNA(Asn) + L-glutamine + ATP + H2O = L-asparaginyl-tRNA(Asn) + L-glutamate + ADP + phosphate + 2 H(+). Allows the formation of correctly charged Asn-tRNA(Asn) or Gln-tRNA(Gln) through the transamidation of misacylated Asp-tRNA(Asn) or Glu-tRNA(Gln) in organisms which lack either or both of asparaginyl-tRNA or glutaminyl-tRNA synthetases. The reaction takes place in the presence of glutamine and ATP through an activated phospho-Asp-tRNA(Asn) or phospho-Glu-tRNA(Gln). The chain is Aspartyl/glutamyl-tRNA(Asn/Gln) amidotransferase subunit B from Pseudomonas paraeruginosa (strain DSM 24068 / PA7) (Pseudomonas aeruginosa (strain PA7)).